We begin with the raw amino-acid sequence, 193 residues long: dCTP deaminase (193 aa).

DCTP-binding positions include 110–115 (RSSLAR), D128, 136–138 (VLE), Y171, K178, and Q182. E138 serves as the catalytic Proton donor/acceptor. The disordered stretch occupies residues 171-193 (YHQRQDAKYHNQKGAVASRIDKD).

The protein belongs to the dCTP deaminase family. In terms of assembly, homotrimer.

The catalysed reaction is dCTP + H2O + H(+) = dUTP + NH4(+). The protein operates within pyrimidine metabolism; dUMP biosynthesis; dUMP from dCTP (dUTP route): step 1/2. In terms of biological role, catalyzes the deamination of dCTP to dUTP. This Hamiltonella defensa subsp. Acyrthosiphon pisum (strain 5AT) protein is dCTP deaminase.